Here is a 270-residue protein sequence, read N- to C-terminus: Probable septum site-determining protein MinC (270 aa).

The interval 105–129 (DRRAPSSKAADEAPVQQAEPAAPAA) is disordered. Residues 116–129 (EAPVQQAEPAAPAA) are compositionally biased toward low complexity.

This sequence belongs to the MinC family. Interacts with MinD and FtsZ.

In terms of biological role, cell division inhibitor that blocks the formation of polar Z ring septums. Rapidly oscillates between the poles of the cell to destabilize FtsZ filaments that have formed before they mature into polar Z rings. Prevents FtsZ polymerization. In Burkholderia pseudomallei (strain 1106a), this protein is Probable septum site-determining protein MinC.